A 299-amino-acid polypeptide reads, in one-letter code: Caspase-1 (299 aa).

Residues 1–28 (MLDGKQDNGNVDSVDIKQRTNGGGDEGD) constitute a propeptide that is removed on maturation. A disordered region spans residues 1-45 (MLDGKQDNGNVDSVDIKQRTNGGGDEGDALGSNSSSQPNRVARMP). Residues His136 and Cys178 contribute to the active site. Positions 185-195 (GGITLSRTETD) are excised as a propeptide.

Belongs to the peptidase C14A family. Heterotetramer that consists of two anti-parallel arranged heterodimers, each one formed by a 19/18 kDa (p19/18) and a 12 kDa (p12) subunit. In terms of processing, the two subunits are derived from the precursor sequence by an autocatalytic mechanism.

Its function is as follows. Involved in the activation cascade of caspases responsible for apoptosis execution. Inhibited by the baculovirus anti-apoptotic protein p35. Cleaves p35 and nuclear immunophilin FKBP46. This Spodoptera frugiperda (Fall armyworm) protein is Caspase-1.